The chain runs to 92 residues: Small ribosomal subunit protein bS20 (92 aa).

A disordered region spans residues 1 to 23; that stretch reads MANTTSAKKATRKIARRTDVNKA.

It belongs to the bacterial ribosomal protein bS20 family.

In terms of biological role, binds directly to 16S ribosomal RNA. The protein is Small ribosomal subunit protein bS20 of Rhizobium leguminosarum bv. trifolii (strain WSM2304).